The primary structure comprises 1406 residues: MKDLLNLFNQQRQTLDFDAIKIALASPDLIRSWSFGEVKKPETINYRTFKPERDGLFCAAIFGPVKDYECLCGKYKRMKHRGVVCEKCGTEVTLAKVRRERMGHIDLASPVAHIWFLKSLPSRIGLMLDMTLRDIERVLYFEAYVVTEPGLTALERRQLLTEEQYLQARQEHGDDFDAAMGAEAVYELLRTIDLQSEMTRLREEIAATGSETKLKRLTKRIKLIEAFLESGNRPEWMVMTVLPVLPPDLRPLVPLDGGRFATSDLNDLYRRVINRNNRLRRLLELSAPDIIVRNEKRMLQESVDALLDNGRRGRAITGTNKRPLKSLADMIKGKQGRFRQNLLGKRVDYSGRSVIVVGPYLRLHQCGLPKKMALELFKPFVFAKLQRRGLATTIKAAKKLVEREEAEVWDILEEVIREHPVMLNRAPTLHRLGIQAFEPVLIEGKAIQLHPLVCTAFNADFDGDQMAVHVPLSLEAQLEARALMMSTNNILSPANGEPIIVPSQDVVLGLYYMTRSLENKKGEGMAFANIAEVKRAYDNRVVELHARVKVRITEVVTDEDGNKQNKTSIVDTTIGRALLAEILPEGLPFALANTELTKKNISRLINSSYRQLGLKDTVVFADKLMYTGFAYATRAGVSIGIDDMLIPDEKKGILTEAEAEVLEIQEQYQSGLVTAGERYNKVVDIWSRTNERIAKAMMDTIGTEKVVNAKGETIDQKSMNSLYIMADSGARGSQAQIRQLAGMRGLMARPDGSIIETPIKANFREGLNVQEYFNSTHGARKGLADTALKTANSGYLTRRLVDVAQDVVITEVDCGTTEGLIMTPIVEGGDVVEPLKDRVLGRVVAEDVFLPGNDEDPIVTRNTLLDEAWVAKLEDAGVQTIKVRSTISCESAFGVCSRCYGRDLARGHLVNIGEAVGVIAAQSIGEPGTQLTMRTFHIGGAASRAAAVDNITVKTTGSVKFSNLKSVEHANGSLVAVSRSGEISVLDAHGRERERYKLPYGATITSKDGDAIKAGQTVANWDPHNHPIVSEVAGFIRFIDFVDGITVIEKTDELTGLASREITDPKRRGTQAKDLRPIVRIVDAKGNDLSIPGTDLPAQYLLPPRSIVNLQDGAAVGVGDVVAKIPQEASKTRDITGGLPRVADLFEARKPKDPAVLAERSGIISFGKDTKGKQRLIIKDTDGSEHEELIPKYRQVIVFEGEHVTKGETIVDGEPSPQDILRLLGVEPLAAYLVKEIQDVYRLQGVKINDKHIEVITRQMLRKVEITDQGSSKFLNGEQVERQRVIEENARLAARNELPAHFDPVLLGITKASLATESFISAASFQETTRVLTEAAVRGTSDNLRGLKENVIVGRLIPAGTGLAYHSNRRRGASGLTESEMQTLAGTPAAVEAPVVEAEAEQASED.

Zn(2+) is bound by residues Cys70, Cys72, Cys85, and Cys88. Mg(2+)-binding residues include Asp460, Asp462, and Asp464. The Zn(2+) site is built by Cys814, Cys889, Cys896, and Cys899.

Belongs to the RNA polymerase beta' chain family. As to quaternary structure, the RNAP catalytic core consists of 2 alpha, 1 beta, 1 beta' and 1 omega subunit. When a sigma factor is associated with the core the holoenzyme is formed, which can initiate transcription. It depends on Mg(2+) as a cofactor. Zn(2+) serves as cofactor.

The catalysed reaction is RNA(n) + a ribonucleoside 5'-triphosphate = RNA(n+1) + diphosphate. Its function is as follows. DNA-dependent RNA polymerase catalyzes the transcription of DNA into RNA using the four ribonucleoside triphosphates as substrates. The polypeptide is DNA-directed RNA polymerase subunit beta' (Stenotrophomonas maltophilia (strain K279a)).